A 211-amino-acid chain; its full sequence is Holliday junction resolvase RecU (211 aa).

Mg(2+) is bound by residues Thr95, Asp97, Glu110, and Gln129.

This sequence belongs to the RecU family. It depends on Mg(2+) as a cofactor.

The protein resides in the cytoplasm. The enzyme catalyses Endonucleolytic cleavage at a junction such as a reciprocal single-stranded crossover between two homologous DNA duplexes (Holliday junction).. In terms of biological role, endonuclease that resolves Holliday junction intermediates in genetic recombination. Cleaves mobile four-strand junctions by introducing symmetrical nicks in paired strands. Promotes annealing of linear ssDNA with homologous dsDNA. Required for DNA repair, homologous recombination and chromosome segregation. This Lactobacillus acidophilus (strain ATCC 700396 / NCK56 / N2 / NCFM) protein is Holliday junction resolvase RecU.